The sequence spans 119 residues: NADH-quinone oxidoreductase subunit A (119 aa).

Helical transmembrane passes span 7-27, 63-83, and 88-108; these read FPVL…MFLG, LIAI…PWGV, and IGWL…VGFV.

The protein belongs to the complex I subunit 3 family. In terms of assembly, NDH-1 is composed of 14 different subunits. Subunits NuoA, H, J, K, L, M, N constitute the membrane sector of the complex.

It localises to the cell inner membrane. It catalyses the reaction a quinone + NADH + 5 H(+)(in) = a quinol + NAD(+) + 4 H(+)(out). In terms of biological role, NDH-1 shuttles electrons from NADH, via FMN and iron-sulfur (Fe-S) centers, to quinones in the respiratory chain. The immediate electron acceptor for the enzyme in this species is believed to be ubiquinone. Couples the redox reaction to proton translocation (for every two electrons transferred, four hydrogen ions are translocated across the cytoplasmic membrane), and thus conserves the redox energy in a proton gradient. The chain is NADH-quinone oxidoreductase subunit A from Polynucleobacter necessarius subsp. necessarius (strain STIR1).